The primary structure comprises 379 residues: Cytochrome b (379 aa).

4 helical membrane-spanning segments follow: residues 33-53 (FGSL…FLAM), 77-98 (WLIR…FIHV), 113-133 (WNIG…GYVL), and 178-198 (FFAF…VHLL). His83 and His97 together coordinate heme b. 2 residues coordinate heme b: His182 and His196. A ubiquinone is bound at residue His201. The next 4 helical transmembrane spans lie at 226–246 (TKDL…ALFF), 288–308 (LGGV…PLLN), 320–340 (VTQV…WIGG), and 347–367 (FTTI…ILIP).

The protein belongs to the cytochrome b family. The cytochrome bc1 complex contains 11 subunits: 3 respiratory subunits (MT-CYB, CYC1 and UQCRFS1), 2 core proteins (UQCRC1 and UQCRC2) and 6 low-molecular weight proteins (UQCRH/QCR6, UQCRB/QCR7, UQCRQ/QCR8, UQCR10/QCR9, UQCR11/QCR10 and a cleavage product of UQCRFS1). This cytochrome bc1 complex then forms a dimer. Heme b is required as a cofactor.

The protein resides in the mitochondrion inner membrane. Functionally, component of the ubiquinol-cytochrome c reductase complex (complex III or cytochrome b-c1 complex) that is part of the mitochondrial respiratory chain. The b-c1 complex mediates electron transfer from ubiquinol to cytochrome c. Contributes to the generation of a proton gradient across the mitochondrial membrane that is then used for ATP synthesis. The polypeptide is Cytochrome b (MT-CYB) (Akodon mystax (Caparao grass mouse)).